The chain runs to 566 residues: CTP synthase (566 aa).

An amidoligase domain region spans residues 1–270 (MTKFVFVTGG…DGLICDKLRL (270 aa)). Ser-13 contacts CTP. Ser-13 serves as a coordination point for UTP. ATP contacts are provided by residues 14-19 (SLGKGI) and Asp-71. Positions 71 and 144 each coordinate Mg(2+). CTP contacts are provided by residues 151–153 (DIE), 191–196 (KTKPTQ), and Lys-227. Residues 191–196 (KTKPTQ) and Lys-227 contribute to the UTP site. Residues 295–547 (SIAMVGKYVD…IAATLEQRSA (253 aa)) form the Glutamine amidotransferase type-1 domain. Gly-356 is an L-glutamine binding site. Residue Cys-383 is the Nucleophile; for glutamine hydrolysis of the active site. Residues 384–387 (LGMQ), Glu-407, and Arg-473 each bind L-glutamine. Active-site residues include His-520 and Glu-522.

Belongs to the CTP synthase family. In terms of assembly, homotetramer.

The enzyme catalyses UTP + L-glutamine + ATP + H2O = CTP + L-glutamate + ADP + phosphate + 2 H(+). It carries out the reaction L-glutamine + H2O = L-glutamate + NH4(+). The catalysed reaction is UTP + NH4(+) + ATP = CTP + ADP + phosphate + 2 H(+). It participates in pyrimidine metabolism; CTP biosynthesis via de novo pathway; CTP from UDP: step 2/2. With respect to regulation, allosterically activated by GTP, when glutamine is the substrate; GTP has no effect on the reaction when ammonia is the substrate. The allosteric effector GTP functions by stabilizing the protein conformation that binds the tetrahedral intermediate(s) formed during glutamine hydrolysis. Inhibited by the product CTP, via allosteric rather than competitive inhibition. In terms of biological role, catalyzes the ATP-dependent amination of UTP to CTP with either L-glutamine or ammonia as the source of nitrogen. Regulates intracellular CTP levels through interactions with the four ribonucleotide triphosphates. This Polaromonas naphthalenivorans (strain CJ2) protein is CTP synthase.